The primary structure comprises 78 residues: Large ribosomal subunit protein bL28 (78 aa).

The protein belongs to the bacterial ribosomal protein bL28 family.

This Prochlorococcus marinus (strain MIT 9215) protein is Large ribosomal subunit protein bL28.